The sequence spans 359 residues: DNA polymerase IV (359 aa).

The 181-residue stretch at 6–186 (IIHVDMDAFY…LPIEAFWGVG (181 aa)) folds into the UmuC domain. The Mg(2+) site is built by D10 and D104. The active site involves E105.

It belongs to the DNA polymerase type-Y family. Monomer. Mg(2+) is required as a cofactor.

It is found in the cytoplasm. It catalyses the reaction DNA(n) + a 2'-deoxyribonucleoside 5'-triphosphate = DNA(n+1) + diphosphate. In terms of biological role, poorly processive, error-prone DNA polymerase involved in untargeted mutagenesis. Copies undamaged DNA at stalled replication forks, which arise in vivo from mismatched or misaligned primer ends. These misaligned primers can be extended by PolIV. Exhibits no 3'-5' exonuclease (proofreading) activity. May be involved in translesional synthesis, in conjunction with the beta clamp from PolIII. This Akkermansia muciniphila (strain ATCC BAA-835 / DSM 22959 / JCM 33894 / BCRC 81048 / CCUG 64013 / CIP 107961 / Muc) protein is DNA polymerase IV.